Consider the following 72-residue polypeptide: Translation initiation factor IF-1 (72 aa).

The 72-residue stretch at 1-72 folds into the S1-like domain; the sequence is MAKDDVIEIQ…TKGRITYRFK (72 aa).

It belongs to the IF-1 family. As to quaternary structure, component of the 30S ribosomal translation pre-initiation complex which assembles on the 30S ribosome in the order IF-2 and IF-3, IF-1 and N-formylmethionyl-tRNA(fMet); mRNA recruitment can occur at any time during PIC assembly.

The protein localises to the cytoplasm. In terms of biological role, one of the essential components for the initiation of protein synthesis. Stabilizes the binding of IF-2 and IF-3 on the 30S subunit to which N-formylmethionyl-tRNA(fMet) subsequently binds. Helps modulate mRNA selection, yielding the 30S pre-initiation complex (PIC). Upon addition of the 50S ribosomal subunit IF-1, IF-2 and IF-3 are released leaving the mature 70S translation initiation complex. The polypeptide is Translation initiation factor IF-1 (Lacticaseibacillus paracasei (strain ATCC 334 / BCRC 17002 / CCUG 31169 / CIP 107868 / KCTC 3260 / NRRL B-441) (Lactobacillus paracasei)).